A 258-amino-acid chain; its full sequence is Thiazole synthase (258 aa).

Residue K100 is the Schiff-base intermediate with DXP of the active site. 1-deoxy-D-xylulose 5-phosphate-binding positions include G161, 187-188 (AG), and 209-210 (NS).

This sequence belongs to the ThiG family. Homotetramer. Forms heterodimers with either ThiH or ThiS.

The protein localises to the plastid. Its subcellular location is the chloroplast. The catalysed reaction is [ThiS sulfur-carrier protein]-C-terminal-Gly-aminoethanethioate + 2-iminoacetate + 1-deoxy-D-xylulose 5-phosphate = [ThiS sulfur-carrier protein]-C-terminal Gly-Gly + 2-[(2R,5Z)-2-carboxy-4-methylthiazol-5(2H)-ylidene]ethyl phosphate + 2 H2O + H(+). Its pathway is cofactor biosynthesis; thiamine diphosphate biosynthesis. In terms of biological role, catalyzes the rearrangement of 1-deoxy-D-xylulose 5-phosphate (DXP) to produce the thiazole phosphate moiety of thiamine. Sulfur is provided by the thiocarboxylate moiety of the carrier protein ThiS. In vitro, sulfur can be provided by H(2)S. In Cyanidioschyzon merolae (strain NIES-3377 / 10D) (Unicellular red alga), this protein is Thiazole synthase.